Consider the following 236-residue polypeptide: Cytochrome b-c1 complex subunit Rieske-4, mitochondrial (236 aa).

The transit peptide at 1–24 (MINFGSCWGLASVTSNSFSIISGF) directs the protein to the mitochondrion. The Mitochondrial matrix portion of the chain corresponds to 25–73 (SSNSVSHAHDMGLVPDLPPTVAAIKNPTSKIVYDEHNHERYPPGDPSKR). A helical membrane pass occupies residues 74-96 (AFAYFVLTGGRFVYASLVRLLIL). At 97–236 (KFVLSMSASK…FLEENKLLIG (140 aa)) the chain is on the mitochondrial intermembrane side. Residues 146 to 234 (INLANSVDLG…YSFLEENKLL (89 aa)) enclose the Rieske domain. Residues C179, H181, C198, and H201 each contribute to the [2Fe-2S] cluster site. Residues C184 and C200 are joined by a disulfide bond.

The protein belongs to the Rieske iron-sulfur protein family. Component of the ubiquinol-cytochrome c oxidoreductase (cytochrome b-c1 complex, complex III, CIII), a multisubunit enzyme composed of 3 respiratory subunits cytochrome b, cytochrome c1 and Rieske protein, 2 core protein subunits, and several low-molecular weight protein subunits. The complex exists as an obligatory dimer and forms supercomplexes (SCs) in the inner mitochondrial membrane with cytochrome c oxidase (complex IV, CIV). [2Fe-2S] cluster serves as cofactor.

It localises to the mitochondrion inner membrane. It carries out the reaction a quinol + 2 Fe(III)-[cytochrome c](out) = a quinone + 2 Fe(II)-[cytochrome c](out) + 2 H(+)(out). In terms of biological role, component of the ubiquinol-cytochrome c oxidoreductase, a multisubunit transmembrane complex that is part of the mitochondrial electron transport chain which drives oxidative phosphorylation. The respiratory chain contains 3 multisubunit complexes succinate dehydrogenase (complex II, CII), ubiquinol-cytochrome c oxidoreductase (cytochrome b-c1 complex, complex III, CIII) and cytochrome c oxidase (complex IV, CIV), that cooperate to transfer electrons derived from NADH and succinate to molecular oxygen, creating an electrochemical gradient over the inner membrane that drives transmembrane transport and the ATP synthase. The cytochrome b-c1 complex catalyzes electron transfer from ubiquinol to cytochrome c, linking this redox reaction to translocation of protons across the mitochondrial inner membrane, with protons being carried across the membrane as hydrogens on the quinol. In the process called Q cycle, 2 protons are consumed from the matrix, 4 protons are released into the intermembrane space and 2 electrons are passed to cytochrome c. The Rieske protein is a catalytic core subunit containing a [2Fe-2S] iron-sulfur cluster. It cycles between 2 conformational states during catalysis to transfer electrons from the quinol bound in the Q(0) site in cytochrome b to cytochrome c1. The polypeptide is Cytochrome b-c1 complex subunit Rieske-4, mitochondrial (Nicotiana tabacum (Common tobacco)).